The chain runs to 188 residues: Elongation factor P (188 aa).

Belongs to the elongation factor P family.

It is found in the cytoplasm. Its pathway is protein biosynthesis; polypeptide chain elongation. Its function is as follows. Involved in peptide bond synthesis. Stimulates efficient translation and peptide-bond synthesis on native or reconstituted 70S ribosomes in vitro. Probably functions indirectly by altering the affinity of the ribosome for aminoacyl-tRNA, thus increasing their reactivity as acceptors for peptidyl transferase. The sequence is that of Elongation factor P from Cereibacter sphaeroides (strain KD131 / KCTC 12085) (Rhodobacter sphaeroides).